The following is a 341-amino-acid chain: Ketol-acid reductoisomerase (NADP(+)) (341 aa).

Residues 2-182 (TDIVYDKDAD…GGLRAGGIRT (181 aa)) form the KARI N-terminal Rossmann domain. Residues 25-28 (YGSQ), K48, S51, S53, and 83-86 (DQHQ) contribute to the NADP(+) site. H108 is an active-site residue. G134 contributes to the NADP(+) binding site. A KARI C-terminal knotted domain is found at 183–328 (TFTEETETDL…RELRKLFAWN (146 aa)). Mg(2+) contacts are provided by D191, E195, E227, and E231. A substrate-binding site is contributed by S252.

It belongs to the ketol-acid reductoisomerase family. Requires Mg(2+) as cofactor.

It carries out the reaction (2R)-2,3-dihydroxy-3-methylbutanoate + NADP(+) = (2S)-2-acetolactate + NADPH + H(+). The enzyme catalyses (2R,3R)-2,3-dihydroxy-3-methylpentanoate + NADP(+) = (S)-2-ethyl-2-hydroxy-3-oxobutanoate + NADPH + H(+). Its pathway is amino-acid biosynthesis; L-isoleucine biosynthesis; L-isoleucine from 2-oxobutanoate: step 2/4. It participates in amino-acid biosynthesis; L-valine biosynthesis; L-valine from pyruvate: step 2/4. Its function is as follows. Involved in the biosynthesis of branched-chain amino acids (BCAA). Catalyzes an alkyl-migration followed by a ketol-acid reduction of (S)-2-acetolactate (S2AL) to yield (R)-2,3-dihydroxy-isovalerate. In the isomerase reaction, S2AL is rearranged via a Mg-dependent methyl migration to produce 3-hydroxy-3-methyl-2-ketobutyrate (HMKB). In the reductase reaction, this 2-ketoacid undergoes a metal-dependent reduction by NADPH to yield (R)-2,3-dihydroxy-isovalerate. The protein is Ketol-acid reductoisomerase (NADP(+)) of Clavibacter michiganensis subsp. michiganensis (strain NCPPB 382).